The sequence spans 324 residues: Anthranilate phosphoribosyltransferase (324 aa).

5-phospho-alpha-D-ribose 1-diphosphate is bound by residues G72, 75–76, S80, 82–85, 99–107, and S111; these read GD, NVST, and KHGNVSITS. Position 72 (G72) interacts with anthranilate. Position 84 (S84) interacts with Mg(2+). Residue N102 participates in anthranilate binding. An anthranilate-binding site is contributed by R157. Mg(2+) is bound by residues D215 and E216.

It belongs to the anthranilate phosphoribosyltransferase family. As to quaternary structure, homodimer. Mg(2+) serves as cofactor.

It catalyses the reaction N-(5-phospho-beta-D-ribosyl)anthranilate + diphosphate = 5-phospho-alpha-D-ribose 1-diphosphate + anthranilate. It participates in amino-acid biosynthesis; L-tryptophan biosynthesis; L-tryptophan from chorismate: step 2/5. Its function is as follows. Catalyzes the transfer of the phosphoribosyl group of 5-phosphorylribose-1-pyrophosphate (PRPP) to anthranilate to yield N-(5'-phosphoribosyl)-anthranilate (PRA). The polypeptide is Anthranilate phosphoribosyltransferase (Pyrococcus abyssi (strain GE5 / Orsay)).